The chain runs to 136 residues: Ribosome-binding factor A (136 aa).

A disordered region spans residues 114–136; it reads DRANRPGPAADEPDEPDEPEDRR. The span at 124-136 shows a compositional bias: acidic residues; it reads DEPDEPDEPEDRR.

The protein belongs to the RbfA family. Monomer. Binds 30S ribosomal subunits, but not 50S ribosomal subunits or 70S ribosomes.

Its subcellular location is the cytoplasm. In terms of biological role, one of several proteins that assist in the late maturation steps of the functional core of the 30S ribosomal subunit. Associates with free 30S ribosomal subunits (but not with 30S subunits that are part of 70S ribosomes or polysomes). Required for efficient processing of 16S rRNA. May interact with the 5'-terminal helix region of 16S rRNA. This Bordetella petrii (strain ATCC BAA-461 / DSM 12804 / CCUG 43448) protein is Ribosome-binding factor A.